Reading from the N-terminus, the 47-residue chain is Lysis protein for colicin E8 (47 aa).

The signal sequence occupies residues 1–19 (MKKITGIILLLLAVIILAA). The N-palmitoyl cysteine moiety is linked to residue cysteine 20. Cysteine 20 carries the S-diacylglycerol cysteine lipid modification.

It is found in the cell outer membrane. In terms of biological role, lysis proteins are required for both colicin release and partial cell lysis. This is Lysis protein for colicin E8 (lys) from Escherichia coli.